The primary structure comprises 103 residues: MSDCYTELEKAVIVLVENFYKYVSKYSLVKNKISKSSFREMLQKELNHMLSDTGNRKAADKLIQNLDANHDGRISFDEYWTLIGGITGPIAKLIHEQEQQSSS.

The EF-hand 1; degenerate domain occupies 12–47; that stretch reads VIVLVENFYKYVSKYSLVKNKISKSSFREMLQKELN. One can recognise an EF-hand 2 domain in the interval 54–89; sequence GNRKAADKLIQNLDANHDGRISFDEYWTLIGGITGP. Asp-67, Asn-69, Asp-71, Arg-73, and Glu-78 together coordinate Ca(2+).

It belongs to the S-100 family. As to quaternary structure, homodimer. Interacts with TP53. In terms of tissue distribution, ubiquitous. Highly expressed in esophagus, adipose tissues and colon. Expressed at lower level in lung, brain, pancreas and skeletal muscle. Expression is up-regulated in tumors of bladder, lung, thyroid gland, pancreas and ovary. Expressed in astrocytes.

The protein localises to the nucleus. It is found in the nucleolus. The protein resides in the cytoplasm. Functionally, calcium-binding protein. Binds one calcium ion per monomer. Can promote differentiation of adipocytes (in vitro). Overexpression in preadipocytes increases their proliferation, enhances adipogenesis and reduces insulin-stimulated glucose uptake. The protein is Protein S100-A16 of Homo sapiens (Human).